A 258-amino-acid chain; its full sequence is Global transcriptional regulator CodY (258 aa).

Residues 1 to 156 (MSILLNKTRK…SATIVGLEIL (156 aa)) are GAF domain. Positions 204 to 223 (ASKIADKVGITRSVIVNALR) form a DNA-binding region, H-T-H motif.

The protein belongs to the CodY family.

Its subcellular location is the cytoplasm. In terms of biological role, DNA-binding global transcriptional regulator which is involved in the adaptive response to starvation and acts by directly or indirectly controlling the expression of numerous genes in response to nutrient availability. During rapid exponential growth, CodY is highly active and represses genes whose products allow adaptation to nutrient depletion. The sequence is that of Global transcriptional regulator CodY from Clostridium acetobutylicum (strain ATCC 824 / DSM 792 / JCM 1419 / IAM 19013 / LMG 5710 / NBRC 13948 / NRRL B-527 / VKM B-1787 / 2291 / W).